The sequence spans 227 residues: Uracil-DNA glycosylase (227 aa).

Catalysis depends on D64, which acts as the Proton acceptor.

It belongs to the uracil-DNA glycosylase (UDG) superfamily. UNG family.

Its subcellular location is the cytoplasm. It carries out the reaction Hydrolyzes single-stranded DNA or mismatched double-stranded DNA and polynucleotides, releasing free uracil.. Excises uracil residues from the DNA which can arise as a result of misincorporation of dUMP residues by DNA polymerase or due to deamination of cytosine. This is Uracil-DNA glycosylase from Alkaliphilus metalliredigens (strain QYMF).